A 447-amino-acid polypeptide reads, in one-letter code: tRNA threonylcarbamoyladenosine dehydratase 2 (447 aa).

A run of 3 helical transmembrane segments spans residues 9–29 (LITA…YAWT), 86–106 (NQYV…NSLV), and 294–314 (ILPV…TWIL).

It belongs to the HesA/MoeB/ThiF family.

The protein resides in the mitochondrion outer membrane. In terms of biological role, catalyzes the ATP-dependent dehydration of threonylcarbamoyladenosine at position 37 (t(6)A37) to form cyclic t(6)A37 (ct(6)A37) in tRNAs that read codons beginning with adenine. The polypeptide is tRNA threonylcarbamoyladenosine dehydratase 2 (TCD2) (Saccharomyces cerevisiae (strain ATCC 204508 / S288c) (Baker's yeast)).